The primary structure comprises 76 residues: Dermaseptin-S7 (76 aa).

Positions 1–22 (MDILKKSLFLVLFLGLISLSFC) are cleaved as a signal peptide. Residues 23–45 (EEEKRENEDEEEQEDDEQSEEKR) constitute a propeptide that is removed on maturation. The segment at 25-45 (EKRENEDEEEQEDDEQSEEKR) is disordered. Residues 30–41 (EDEEEQEDDEQS) show a composition bias toward acidic residues. Position 73 is a glutamine amide (Q73). The propeptide occupies 75 to 76 (EQ).

This sequence belongs to the frog skin active peptide (FSAP) family. Dermaseptin subfamily. In terms of tissue distribution, expressed by the skin glands.

It is found in the secreted. Antimicrobial peptide. This Phyllomedusa sauvagei (Sauvage's leaf frog) protein is Dermaseptin-S7.